Reading from the N-terminus, the 182-residue chain is Methyl-coenzyme M reductase operon protein C (182 aa).

In terms of assembly, MCR is composed of three subunits: alpha, beta, and gamma. The function of proteins C and D is not known.

The protein is Methyl-coenzyme M reductase operon protein C (mcrC) of Methanococcus voltae.